The chain runs to 1055 residues: Elongation factor 3 (1055 aa).

V45 serves as a coordination point for ADP. 7 HEAT repeats span residues 48–86 (FTQI…NGAA), 96–133 (SAEN…SMNP), 134–172 (WASF…SAPF), 176–213 (EAMP…LVEN), 218–255 (KFVP…APTI), 257–290 (LIAP…LVDS), and 296–337 (PFLP…VPAE). ABC transporter domains are found at residues 447–659 (CNIE…SYYQ) and 687–1004 (LKMR…KKAA). Residues N723, E933, N936, and H962 each coordinate ADP. The disordered stretch occupies residues 1024–1055 (EKKLSAADKRKAKKDRMARRKRGEEVFSDEEL). Residues 1033–1044 (RKAKKDRMARRK) are compositionally biased toward basic residues.

The protein belongs to the ABC transporter superfamily. ABCF family. EF3 subfamily. Interacts with CCH1; the interaction is direct and required for the localization of CCH1 to the cell membrane.

The protein resides in the cytoplasm. Its subcellular location is the cytosol. The catalysed reaction is ATP + H2O = ADP + phosphate + H(+). It functions in the pathway protein biosynthesis; polypeptide chain elongation. In terms of biological role, ribosome-dependent ATPase that functions in cytoplasmic translation elongation. Required for the ATP-dependent release of deacylated tRNA from the ribosomal E-site during protein biosynthesis. Stimulates the eEF1A-dependent binding of aminoacyl-tRNA to the ribosomal A-site, which has reduced affinity for tRNA as long as the E-site is occupied. Assists translation termination by stimulating the release of nascent protein from the ribosome by release factors. Appears to localize calcium-channel protein CCH1 to the plasma membrane. The polypeptide is Elongation factor 3 (Cryptococcus neoformans var. grubii serotype A (strain H99 / ATCC 208821 / CBS 10515 / FGSC 9487) (Filobasidiella neoformans var. grubii)).